A 454-amino-acid polypeptide reads, in one-letter code: Glutamate--tRNA ligase (454 aa).

The short motif at 7–17 is the 'HIGH' region element; that stretch reads PSPTGCLHIGG. Zn(2+) is bound by residues C96, C98, C123, and D125. The 'KMSKS' region motif lies at 230 to 234; the sequence is RLSKR. Position 233 (K233) interacts with ATP.

The protein belongs to the class-I aminoacyl-tRNA synthetase family. Glutamate--tRNA ligase type 1 subfamily. As to quaternary structure, monomer. Requires Zn(2+) as cofactor.

It localises to the cytoplasm. It catalyses the reaction tRNA(Glu) + L-glutamate + ATP = L-glutamyl-tRNA(Glu) + AMP + diphosphate. Catalyzes the attachment of glutamate to tRNA(Glu) in a two-step reaction: glutamate is first activated by ATP to form Glu-AMP and then transferred to the acceptor end of tRNA(Glu). The polypeptide is Glutamate--tRNA ligase (Ruthia magnifica subsp. Calyptogena magnifica).